The primary structure comprises 806 residues: Phenylalanine--tRNA ligase beta subunit (806 aa).

Residues 40–155 (NKGVKGVVVG…SDAEVGADAL (116 aa)) form the tRNA-binding domain. Residues 409-484 (VQERTVSVTA…RLYGYDHIPV (76 aa)) enclose the B5 domain. D462, D468, E471, and E472 together coordinate Mg(2+). Residues 712–805 (PRFPSMTRDM…VEEKFGAELR (94 aa)) form the FDX-ACB domain.

This sequence belongs to the phenylalanyl-tRNA synthetase beta subunit family. Type 1 subfamily. In terms of assembly, tetramer of two alpha and two beta subunits. The cofactor is Mg(2+).

It is found in the cytoplasm. It carries out the reaction tRNA(Phe) + L-phenylalanine + ATP = L-phenylalanyl-tRNA(Phe) + AMP + diphosphate + H(+). This is Phenylalanine--tRNA ligase beta subunit from Bacillus cereus (strain ZK / E33L).